The primary structure comprises 635 residues: Cationic amino acid transporter 2, vacuolar (635 aa).

The Cytoplasmic portion of the chain corresponds to 1–48; it reads MGFLVDTQKEGGGHSWGYVRSLVRRKQVDSANGQSHGHQLARALTVPH. Residues 49–69 form a helical membrane-spanning segment; that stretch reads LVAIGVGATIGAGVYILVGTV. Residues 70-76 lie on the Vacuolar side of the membrane; it reads AREHSGP. Residues 77 to 97 traverse the membrane as a helical segment; that stretch reads SLALSFLIAGIAAGLSAFCYA. The Cytoplasmic segment spans residues 98–108; sequence ELSSRCPSAGS. Residues 109 to 131 form a helical membrane-spanning segment; it reads AYHYSYICVGEGVAWIIGWALIL. Topologically, residues 132–171 are vacuolar; sequence EYTIGGSAVARGISPNLALIFGGEDGLPAILARHQIPGLD. Residues 172-192 traverse the membrane as a helical segment; it reads IVVDPCAAILVFVVTGLLCMG. The Cytoplasmic portion of the chain corresponds to 193–200; it reads IKESTFAQ. Residues 201–221 form a helical membrane-spanning segment; sequence GIVTAVNVCVLLFVIVAGSYL. Residues 222 to 235 lie on the Vacuolar side of the membrane; that stretch reads GFKTGWPGYELPTG. A helical transmembrane segment spans residues 236 to 256; that stretch reads FFPFGVDGMFAGSATVFFAFI. Residues 257–280 are Cytoplasmic-facing; sequence GFDSVASTAEEVRNPQRDLPIGIG. A helical membrane pass occupies residues 281–301; that stretch reads LALLLCCSLYMMVSIVIVGLI. Topologically, residues 302–324 are vacuolar; it reads PYYAMDPDTPISSAFASHDMQWA. The helical transmembrane segment at 325–345 threads the bilayer; that stretch reads VYLITLGAVMALCSALMGALL. At 346-376 the chain is on the cytoplasmic side; that stretch reads PQPRILMAMARDGLLPSIFSDINKRTQVPVK. Residues 377-397 form a helical membrane-spanning segment; sequence ATVATGLCAATLAFFMDVSQL. A398 is a topological domain (vacuolar). Residues 399–419 form a helical membrane-spanning segment; that stretch reads GMVSVGTLLAFTMVAISVLIL. The Cytoplasmic segment spans residues 420-493; the sequence is RYVPPDEQPL…CLVLSEETRR (74 aa). The chain crosses the membrane as a helical span at residues 494–514; it reads IVAGWSIMFTCVGAFLLSYAA. Topologically, residues 515–524 are vacuolar; the sequence is SSLSFPGLIR. The helical transmembrane segment at 525–545 threads the bilayer; sequence YPLCGVGGCLLLAGLIALSSI. At 546–560 the chain is on the cytoplasmic side; sequence DQDDARHTFGHSGGY. A helical membrane pass occupies residues 561 to 581; the sequence is MCPFVPLLPIICILINMYLLV. The Vacuolar portion of the chain corresponds to 582-585; it reads NLGS. Residues 586-606 form a helical membrane-spanning segment; that stretch reads ATWARVSVWLLIGVIVYVFYG. Residues 607–635 lie on the Cytoplasmic side of the membrane; sequence RKNSSLANAVYVTTAHAEEIYREHEGSLA.

This sequence belongs to the amino acid-polyamine-organocation (APC) superfamily. Cationic amino acid transporter (CAT) (TC 2.A.3.3) family. As to expression, expressed in roots, stems, flowers, leaves, and siliques.

The protein localises to the vacuole membrane. Its function is as follows. Permease involved in the transport of the cationic amino acids. In Arabidopsis thaliana (Mouse-ear cress), this protein is Cationic amino acid transporter 2, vacuolar (CAT2).